Here is a 563-residue protein sequence, read N- to C-terminus: Cytidine monophosphate-N-acetylneuraminic acid hydroxylase (563 aa).

In terms of domain architecture, Rieske spans 10–108; the sequence is LSPAETANLK…VEMDGNDGLF (99 aa). [2Fe-2S] cluster-binding residues include cysteine 50, histidine 52, cysteine 71, and histidine 74.

It belongs to the CMP-Neu5Ac hydroxylase family. It depends on [2Fe-2S] cluster as a cofactor.

The protein resides in the cytoplasm. The catalysed reaction is CMP-N-acetyl-beta-neuraminate + 2 Fe(II)-[cytochrome b5] + O2 + 2 H(+) = CMP-N-glycoloyl-beta-neuraminate + 2 Fe(III)-[cytochrome b5] + H2O. Its pathway is amino-sugar metabolism; N-acetylneuraminate metabolism. In terms of biological role, sialic acids are components of carbohydrate chains of glycoconjugates and are involved in cell-cell recognition and cell-pathogen interactions. Catalyzes the conversion of CMP-N-acetylneuraminic acid (CMP-Neu5Ac) into its hydroxylated derivative CMP-N-glycolylneuraminic acid (CMP-Neu5Gc), a sialic acid abundantly expressed at the surface of many cells. The protein is Cytidine monophosphate-N-acetylneuraminic acid hydroxylase (CMAH) of Cricetulus griseus (Chinese hamster).